We begin with the raw amino-acid sequence, 328 residues long: Nickel import system permease protein NikB (328 aa).

6 helical membrane-spanning segments follow: residues 11 to 31 (LMQM…LMKL), 104 to 124 (LLIS…LGII), 139 to 159 (VIST…LLFI), 170 to 190 (ILSQ…AYII), 229 to 249 (ILPI…GTVV), and 279 to 299 (VLFI…LTLL). The ABC transmembrane type-1 domain maps to 100 to 297 (APITLLISFS…IINTIADLLT (198 aa)).

Belongs to the binding-protein-dependent transport system permease family. OppBC subfamily. In terms of assembly, the complex is composed of two ATP-binding proteins (NikD and NikE), two transmembrane proteins (NikB and NikC) and a solute-binding protein (NikA).

It is found in the cell membrane. Functionally, part of the ABC transporter complex NikABCDE (Opp2) involved in nickel import. Probably responsible for the translocation of the substrate across the membrane. The sequence is that of Nickel import system permease protein NikB from Staphylococcus aureus (strain USA300).